A 253-amino-acid polypeptide reads, in one-letter code: Triosephosphate isomerase (253 aa).

Residue 8–10 (NWK) coordinates substrate. The active-site Electrophile is the H93. The Proton acceptor role is filled by E165. Substrate contacts are provided by residues G171, S210, and 231–232 (GG).

This sequence belongs to the triosephosphate isomerase family. In terms of assembly, homodimer.

Its subcellular location is the cytoplasm. The catalysed reaction is D-glyceraldehyde 3-phosphate = dihydroxyacetone phosphate. It functions in the pathway carbohydrate biosynthesis; gluconeogenesis. It participates in carbohydrate degradation; glycolysis; D-glyceraldehyde 3-phosphate from glycerone phosphate: step 1/1. In terms of biological role, involved in the gluconeogenesis. Catalyzes stereospecifically the conversion of dihydroxyacetone phosphate (DHAP) to D-glyceraldehyde-3-phosphate (G3P). The protein is Triosephosphate isomerase of Francisella tularensis subsp. novicida (strain U112).